The sequence spans 1081 residues: DNA polymerase delta catalytic subunit (1081 aa).

The tract at residues 1 to 22 (MTSKRPGGSSFQPEVKRKRESD) is disordered. Zn(2+)-binding residues include C981, C984, C998, and C1001. The CysA-type zinc-finger motif lies at 981–1001 (CLGCKSVLPRAESENAVCKHC). Residues C1030, C1033, C1043, and C1048 each contribute to the [4Fe-4S] cluster site. The CysB motif signature appears at 1030 to 1048 (CQNCAKTMQDKVNCSARDC).

It belongs to the DNA polymerase type-B family. Heterodimer with subunits of 125 kDa and 50 kDa. The 125 kDa subunit contains the polymerase active site and most likely the active site for the 3'-5' exonuclease activity. The cofactor is [4Fe-4S] cluster.

The protein localises to the nucleus. It carries out the reaction DNA(n) + a 2'-deoxyribonucleoside 5'-triphosphate = DNA(n+1) + diphosphate. Possesses two enzymatic activities: DNA synthesis (polymerase) and an exonucleolytic activity that degrades single stranded DNA in the 3'- to 5'-direction. Required with its accessory proteins (proliferating cell nuclear antigen (PCNA) and replication factor C (RFC) or activator 1) for leading strand synthesis. Also involved in completing Okazaki fragments initiated by the DNA polymerase alpha/primase complex. This is DNA polymerase delta catalytic subunit from Caenorhabditis elegans.